The chain runs to 208 residues: Uracil phosphoribosyltransferase (208 aa).

5-phospho-alpha-D-ribose 1-diphosphate contacts are provided by residues R78, R103, and 130–138 (DPMFATGGT). Uracil is bound by residues I193 and 198-200 (GDA). D199 serves as a coordination point for 5-phospho-alpha-D-ribose 1-diphosphate.

Belongs to the UPRTase family. Requires Mg(2+) as cofactor.

The catalysed reaction is UMP + diphosphate = 5-phospho-alpha-D-ribose 1-diphosphate + uracil. It participates in pyrimidine metabolism; UMP biosynthesis via salvage pathway; UMP from uracil: step 1/1. Its activity is regulated as follows. Allosterically activated by GTP. Functionally, catalyzes the conversion of uracil and 5-phospho-alpha-D-ribose 1-diphosphate (PRPP) to UMP and diphosphate. The sequence is that of Uracil phosphoribosyltransferase from Campylobacter concisus (strain 13826).